Consider the following 51-residue polypeptide: Large ribosomal subunit protein eL39x (51 aa).

It belongs to the eukaryotic ribosomal protein eL39 family.

This is Large ribosomal subunit protein eL39x (RPL39C) from Oryza sativa subsp. japonica (Rice).